The primary structure comprises 156 residues: Transcription antitermination protein NusB (156 aa).

It belongs to the NusB family.

Its function is as follows. Involved in transcription antitermination. Required for transcription of ribosomal RNA (rRNA) genes. Binds specifically to the boxA antiterminator sequence of the ribosomal RNA (rrn) operons. The sequence is that of Transcription antitermination protein NusB from Syntrophotalea carbinolica (strain DSM 2380 / NBRC 103641 / GraBd1) (Pelobacter carbinolicus).